We begin with the raw amino-acid sequence, 514 residues long: 3-octaprenyl-4-hydroxybenzoate carboxy-lyase (514 aa).

Position 177 (Asn-177) interacts with Mn(2+). Prenylated FMN-binding positions include 180–182 (IYR), 194–196 (RWL), and 199–200 (RG). A Mn(2+)-binding site is contributed by Glu-243. Asp-314 functions as the Proton donor in the catalytic mechanism.

This sequence belongs to the UbiD family. Homohexamer. Requires prenylated FMN as cofactor. The cofactor is Mn(2+).

Its subcellular location is the cell membrane. It catalyses the reaction a 4-hydroxy-3-(all-trans-polyprenyl)benzoate + H(+) = a 2-(all-trans-polyprenyl)phenol + CO2. It functions in the pathway cofactor biosynthesis; ubiquinone biosynthesis. Catalyzes the decarboxylation of 3-octaprenyl-4-hydroxy benzoate to 2-octaprenylphenol, an intermediate step in ubiquinone biosynthesis. The chain is 3-octaprenyl-4-hydroxybenzoate carboxy-lyase from Bordetella bronchiseptica (strain ATCC BAA-588 / NCTC 13252 / RB50) (Alcaligenes bronchisepticus).